Reading from the N-terminus, the 101-residue chain is Putative pterin-4-alpha-carbinolamine dehydratase (101 aa).

It belongs to the pterin-4-alpha-carbinolamine dehydratase family.

The enzyme catalyses (4aS,6R)-4a-hydroxy-L-erythro-5,6,7,8-tetrahydrobiopterin = (6R)-L-erythro-6,7-dihydrobiopterin + H2O. The chain is Putative pterin-4-alpha-carbinolamine dehydratase from Streptomyces coelicolor (strain ATCC BAA-471 / A3(2) / M145).